A 483-amino-acid polypeptide reads, in one-letter code: NAD-dependent protein deacetylase SRT1 (483 aa).

In terms of domain architecture, Deacetylase sirtuin-type spans 27–270 (PELLHKKIEE…MYMMNLRIPP (244 aa)). Residues 53 to 57 (AGIST), 63 to 65 (DFR), and 114 to 117 (QNVD) each bind NAD(+). Histidine 134 functions as the Proton acceptor in the catalytic mechanism. Residues cysteine 142, cysteine 145, cysteine 167, and cysteine 172 each contribute to the Zn(2+) site. NAD(+) is bound by residues 209-211 (GTS) and 235-237 (NLQ).

This sequence belongs to the sirtuin family. Class IV subfamily. Requires Zn(2+) as cofactor.

It is found in the nucleus. The enzyme catalyses N(6)-acetyl-L-lysyl-[protein] + NAD(+) + H2O = 2''-O-acetyl-ADP-D-ribose + nicotinamide + L-lysyl-[protein]. NAD-dependent protein deacetylase. Has deacetylase activity towards H3K9Ac. May have a function in the safeguard against genome instability and DNA damage to ensure plant cell growth. May negatively regulate metabolic signal transduction involving methanol and jasmonates during leaf senescence. Required for histone H3K9Ac deacetylation and repression of AP2-1/RSR1 and amylase genes during early seed development. Functions as an epigenetic regulator to repress the expression of glycolytic genes and glycolysis in seedlings. Reduces lysine acetylation of the glycolytic glyceraldehyde-3-phosphate dehydrogenase (GAPDH), which is found to also function as an activator of glycolytic gene expression. The sequence is that of NAD-dependent protein deacetylase SRT1 from Oryza sativa subsp. indica (Rice).